Reading from the N-terminus, the 290-residue chain is Nucleoid occlusion protein (290 aa).

Residues 153 to 172 (EALAQRLGKGQSTIANKLRL) constitute a DNA-binding region (H-T-H motif).

It belongs to the ParB family.

It localises to the cytoplasm. Its subcellular location is the nucleoid. In terms of biological role, effects nucleoid occlusion by binding relatively nonspecifically to DNA and preventing the assembly of the division machinery in the vicinity of the nucleoid, especially under conditions that disturb the cell cycle. It helps to coordinate cell division and chromosome segregation by preventing the formation of the Z ring through the nucleoid, which would cause chromosome breakage. This chain is Nucleoid occlusion protein, found in Bacillus anthracis (strain A0248).